The sequence spans 212 residues: MNDLAHMRTNYVRSVLSEETAGFDPLALFSLWFSEAKEEGELEPNAMSLSTVNTDGKPSVRIVLLKGLIRNEFQFFTNYSSHKGKDIEQNRNVALTFFWPKMERQIRIEGTVTKIPKEESEAYFKIRPRESQLGALTSNQSSVVVSREELETKFQTLEKEWEGKEIPMPESWGGYSVSPNKIEFWQGRAGRLHDRIVFERKNENWIRSRLSP.

Substrate is bound by residues 8-11 (RTNY) and lysine 66. Residues 61-66 (RIVLLK), 76-77 (FT), lysine 83, and glutamine 105 each bind FMN. Substrate is bound by residues tyrosine 123, arginine 127, and serine 131. FMN contacts are provided by residues 140-141 (QS) and tryptophan 185. Residue 191–193 (RLH) coordinates substrate. FMN is bound at residue arginine 195.

The protein belongs to the pyridoxamine 5'-phosphate oxidase family. As to quaternary structure, homodimer. Requires FMN as cofactor.

It catalyses the reaction pyridoxamine 5'-phosphate + O2 + H2O = pyridoxal 5'-phosphate + H2O2 + NH4(+). It carries out the reaction pyridoxine 5'-phosphate + O2 = pyridoxal 5'-phosphate + H2O2. The protein operates within cofactor metabolism; pyridoxal 5'-phosphate salvage; pyridoxal 5'-phosphate from pyridoxamine 5'-phosphate: step 1/1. It participates in cofactor metabolism; pyridoxal 5'-phosphate salvage; pyridoxal 5'-phosphate from pyridoxine 5'-phosphate: step 1/1. Catalyzes the oxidation of either pyridoxine 5'-phosphate (PNP) or pyridoxamine 5'-phosphate (PMP) into pyridoxal 5'-phosphate (PLP). The protein is Pyridoxine/pyridoxamine 5'-phosphate oxidase of Leptospira biflexa serovar Patoc (strain Patoc 1 / Ames).